The chain runs to 169 residues: MSSAARHHCSGLRERLGCVQCSFCATVLLVSVPCSSVLRVVAVQCGHCSGILSAVNLPPSPVSASIELTPQELDAGPPPGEYSDESSGDDREGRDAEDDAPAPAAAAVANKPPGRKQRTPSAYNCFVKEEIKRIKSMEPNITHKQAFSTAAKNWAHLPRIQQKRGRDSC.

The segment at 21–48 adopts a C4-type zinc-finger fold; the sequence is CSFCATVLLVSVPCSSVLRVVAVQCGHC. The disordered stretch occupies residues 63-122; sequence SASIELTPQELDAGPPPGEYSDESSGDDREGRDAEDDAPAPAAAAVANKPPGRKQRTPSA.

This sequence belongs to the YABBY family. In terms of tissue distribution, expressed in leaf sheaths and flowers.

Its subcellular location is the nucleus. This chain is Protein YABBY 7 (YAB7), found in Oryza sativa subsp. japonica (Rice).